A 427-amino-acid chain; its full sequence is Histidinol dehydrogenase (427 aa).

Residues Tyr-123, Gln-185, and Asn-208 each coordinate NAD(+). Positions 231, 253, and 256 each coordinate substrate. Zn(2+) is bound by residues Gln-253 and His-256. Residues Glu-321 and His-322 each act as proton acceptor in the active site. Positions 322, 355, 409, and 414 each coordinate substrate. Asp-355 contacts Zn(2+). His-414 serves as a coordination point for Zn(2+).

Belongs to the histidinol dehydrogenase family. Zn(2+) is required as a cofactor.

It carries out the reaction L-histidinol + 2 NAD(+) + H2O = L-histidine + 2 NADH + 3 H(+). It participates in amino-acid biosynthesis; L-histidine biosynthesis; L-histidine from 5-phospho-alpha-D-ribose 1-diphosphate: step 9/9. Catalyzes the sequential NAD-dependent oxidations of L-histidinol to L-histidinaldehyde and then to L-histidine. This is Histidinol dehydrogenase from Oceanobacillus iheyensis (strain DSM 14371 / CIP 107618 / JCM 11309 / KCTC 3954 / HTE831).